The chain runs to 336 residues: HTH-type transcriptional regulator AscG (336 aa).

One can recognise an HTH lacI-type domain in the interval 2-56 (TTMLEVAKRAGVSKATVSRVLSGNGYVSQETKDRVFQAVEESGYRPNLLARNLSA). The segment at residues 4 to 23 (MLEVAKRAGVSKATVSRVLS) is a DNA-binding region (H-T-H motif).

Repressor of the asc operon. The cryptic operon is activated by the insertion of IS186 into the ascG gene. The chain is HTH-type transcriptional regulator AscG (ascG) from Escherichia coli (strain K12).